The primary structure comprises 228 residues: UPF0758 protein SAB1521c (228 aa).

One can recognise an MPN domain in the interval 102 to 224 (KITQPSDVAD…FTSLVEAGYF (123 aa)). Residues histidine 173, histidine 175, and aspartate 186 each coordinate Zn(2+). Positions 173-186 (HNHPSGDVTPSQED) match the JAMM motif motif.

It belongs to the UPF0758 family.

The polypeptide is UPF0758 protein SAB1521c (Staphylococcus aureus (strain bovine RF122 / ET3-1)).